Here is a 150-residue protein sequence, read N- to C-terminus: MRKIVAGKLHGLTVTGADLNYHGSITLDPEHCEEAGILPLEFVEIWNRNSGARISTYVILGERGSRCCVLNGAAARTCQPGDEVIICNSVYVPEGEIVALRPRVLTFDKDNRVTSRLTYEVTRDSQGAYHFAVRDERGDEKPIPLRVEAS.

S24 acts as the Schiff-base intermediate with substrate; via pyruvic acid in catalysis. S24 carries the pyruvic acid (Ser) modification. T56 provides a ligand contact to substrate. The active-site Proton donor is the Y57. 72–74 (GAA) contributes to the substrate binding site.

The protein belongs to the PanD family. In terms of assembly, heterooctamer of four alpha and four beta subunits. Requires pyruvate as cofactor. Post-translationally, is synthesized initially as an inactive proenzyme, which is activated by self-cleavage at a specific serine bond to produce a beta-subunit with a hydroxyl group at its C-terminus and an alpha-subunit with a pyruvoyl group at its N-terminus.

The protein localises to the cytoplasm. The enzyme catalyses L-aspartate + H(+) = beta-alanine + CO2. Its pathway is cofactor biosynthesis; (R)-pantothenate biosynthesis; beta-alanine from L-aspartate: step 1/1. Its function is as follows. Catalyzes the pyruvoyl-dependent decarboxylation of aspartate to produce beta-alanine. The chain is Aspartate 1-decarboxylase from Xanthobacter autotrophicus (strain ATCC BAA-1158 / Py2).